The sequence spans 310 residues: Ribosomal RNA small subunit methyltransferase H (310 aa).

Residues 35 to 37 (GGH), aspartate 52, phenylalanine 79, aspartate 100, and glutamine 107 contribute to the S-adenosyl-L-methionine site.

The protein belongs to the methyltransferase superfamily. RsmH family.

Its subcellular location is the cytoplasm. The catalysed reaction is cytidine(1402) in 16S rRNA + S-adenosyl-L-methionine = N(4)-methylcytidine(1402) in 16S rRNA + S-adenosyl-L-homocysteine + H(+). Its function is as follows. Specifically methylates the N4 position of cytidine in position 1402 (C1402) of 16S rRNA. The polypeptide is Ribosomal RNA small subunit methyltransferase H (Anaeromyxobacter sp. (strain K)).